Reading from the N-terminus, the 471-residue chain is MEGQVVGRVFRLFQRRLLQLRAGPPQDNSGEALKEPERAQEHSLPNFAGGQHFFEYLLVVSLKKKRSEDDYEPIITYQFPKRENLLRGQQEEEERLLKAIPLFCFPDGNEWASLTEYPRETFSFVLTNVDGSRKIGYCRRLLPAGPGPRLPKVYCIISCIGCFGLFSKILDEVEKRHQISMAVIYPFMQGLREAAFPAPGKTVTLKSFIPDSGTEFISLTRPLDSHLEHVDFSSLLHCLSFEQILQIFASAVLERKIIFLAEGLSTLSQCIHAAAALLYPFSWAHTYIPVVPESLLATVCCPTPFMVGVQMRFQQEVMDSPMEEVLLVNLCEGTFLMSVGDEKDILPPKLQDDILDSLGQGINELKTAEQINEHVSGPFVQFFVKIVGHYASYIKREANGQGHFQERSFCKALTSKTNRRFVKKFVKTQLFSLFIQEAEKSKNPPAGYFQQKILEYEEQKKQKKPREKTVK.

Positions 55 to 204 (EYLLVVSLKK…AFPAPGKTVT (150 aa)) constitute a uDENN domain. A cDENN domain is found at 226–359 (HLEHVDFSSL…LQDDILDSLG (134 aa)). A dDENN domain is found at 361 to 445 (GINELKTAEQ…QEAEKSKNPP (85 aa)).

As to expression, in bronchial mucosa, mainly expressed in ciliated and basal epithelial cells and weakly in alveolar cells (at protein level). Tends to be down-regulated in lung cancers, immortalized bronchial epithelial cell lines and precancerous lesions.

It localises to the cytoplasm. In terms of biological role, guanine nucleotide exchange factor (GEF) which may activate RAB9A and RAB9B. Promotes the exchange of GDP to GTP, converting inactive GDP-bound Rab proteins into their active GTP-bound form. This Homo sapiens (Human) protein is DENN domain-containing protein 2D (DENND2D).